The following is a 334-amino-acid chain: Acryloyl-coenzyme A reductase (334 aa).

Cys-38 contacts Zn(2+). Tyr-39 contacts NADP(+). 6 residues coordinate Zn(2+): His-60, Asp-90, Cys-93, Cys-96, Cys-104, and Cys-146. Residues 173 to 176 (SGGV) and 195 to 197 (TTS) each bind NADP(+).

The protein belongs to the zinc-containing alcohol dehydrogenase family. As to quaternary structure, monomer. It depends on Zn(2+) as a cofactor.

The catalysed reaction is propanoyl-CoA + NADP(+) = acryloyl-CoA + NADPH + H(+). In terms of biological role, plays a role in autotrophic carbon fixation via the 3-hydroxypropionate/4-hydroxybutyrate cycle. Catalyzes the acryloyl-CoA dependent NADPH oxidation and formation of propionyl-CoA. Inactive towards 3-hydroxypropionyl-CoA, NADH and crotonyl-CoA. The sequence is that of Acryloyl-coenzyme A reductase from Sulfurisphaera tokodaii (strain DSM 16993 / JCM 10545 / NBRC 100140 / 7) (Sulfolobus tokodaii).